The primary structure comprises 364 residues: Spermidine/putrescine import ATP-binding protein PotA (364 aa).

An ABC transporter domain is found at 5-235 (LSFKGVTKGF…PVNRFVADFI (231 aa)). Position 37–44 (37–44 (GPSGCGKT)) interacts with ATP.

It belongs to the ABC transporter superfamily. Spermidine/putrescine importer (TC 3.A.1.11.1) family. In terms of assembly, the complex is composed of two ATP-binding proteins (PotA), two transmembrane proteins (PotB and PotC) and a solute-binding protein (PotD).

The protein localises to the cell membrane. The catalysed reaction is ATP + H2O + polyamine-[polyamine-binding protein]Side 1 = ADP + phosphate + polyamineSide 2 + [polyamine-binding protein]Side 1.. In terms of biological role, part of the ABC transporter complex PotABCD involved in spermidine/putrescine import. Responsible for energy coupling to the transport system. The protein is Spermidine/putrescine import ATP-binding protein PotA of Staphylococcus haemolyticus (strain JCSC1435).